Consider the following 540-residue polypeptide: Bifunctional purine biosynthesis protein PurH (540 aa).

The MGS-like domain occupies 1–144 (MKRALISVYD…KNYQDVGVVV (144 aa)). The disordered stretch occupies residues 204–224 (ETAPERPIGADPGPQKPAAPS).

The protein belongs to the PurH family.

It carries out the reaction (6R)-10-formyltetrahydrofolate + 5-amino-1-(5-phospho-beta-D-ribosyl)imidazole-4-carboxamide = 5-formamido-1-(5-phospho-D-ribosyl)imidazole-4-carboxamide + (6S)-5,6,7,8-tetrahydrofolate. The enzyme catalyses IMP + H2O = 5-formamido-1-(5-phospho-D-ribosyl)imidazole-4-carboxamide. The protein operates within purine metabolism; IMP biosynthesis via de novo pathway; 5-formamido-1-(5-phospho-D-ribosyl)imidazole-4-carboxamide from 5-amino-1-(5-phospho-D-ribosyl)imidazole-4-carboxamide (10-formyl THF route): step 1/1. It participates in purine metabolism; IMP biosynthesis via de novo pathway; IMP from 5-formamido-1-(5-phospho-D-ribosyl)imidazole-4-carboxamide: step 1/1. This chain is Bifunctional purine biosynthesis protein PurH, found in Symbiobacterium thermophilum (strain DSM 24528 / JCM 14929 / IAM 14863 / T).